Here is a 388-residue protein sequence, read N- to C-terminus: Pepsin A-3 (388 aa).

The first 15 residues, 1 to 15 (MKWLLLLGLVALSEC), serve as a signal peptide directing secretion. Positions 16 to 62 (IMYKVPLIRKKSLRRTLSERGLLKDFLKKHNLNPARKYFPQWKAPTL) are cleaved as a propeptide — activation peptide. A Peptidase A1 domain is found at 76–385 (YFGTIGIGTP…DRANNQVGLA (310 aa)). Aspartate 94 is an active-site residue. 2 cysteine pairs are disulfide-bonded: cysteine 107–cysteine 112 and cysteine 268–cysteine 272. Residue aspartate 277 is part of the active site. The cysteines at positions 311 and 344 are disulfide-linked.

The protein belongs to the peptidase A1 family.

It is found in the secreted. It carries out the reaction Preferential cleavage: hydrophobic, preferably aromatic, residues in P1 and P1' positions. Cleaves 1-Phe-|-Val-2, 4-Gln-|-His-5, 13-Glu-|-Ala-14, 14-Ala-|-Leu-15, 15-Leu-|-Tyr-16, 16-Tyr-|-Leu-17, 23-Gly-|-Phe-24, 24-Phe-|-Phe-25 and 25-Phe-|-Tyr-26 bonds in the B chain of insulin.. Its function is as follows. Shows particularly broad specificity; although bonds involving phenylalanine and leucine are preferred, many others are also cleaved to some extent. The chain is Pepsin A-3 (PGA3) from Homo sapiens (Human).